Consider the following 561-residue polypeptide: Delta(24)-sterol reductase (561 aa).

Residues 1–25 (MSDLQTPLVRPKRKKTWVDYFVKFR) lie on the Lumenal side of the membrane. S2 carries the phosphoserine modification. Residues 26–46 (WIIVIFIVLPFSATFYFLIYL) traverse the membrane as a helical; Signal-anchor segment. Residues 47–561 (GDMWSESKSF…HLETAYAEAD (515 aa)) lie on the Cytoplasmic side of the membrane. The FAD-binding PCMH-type domain occupies 49-232 (MWSESKSFEK…VAAEIRLIKV (184 aa)). The interval 518–539 (CRKKYRAIGTFMSVYYKSKKGR) is interaction with calmodulin.

This sequence belongs to the DIMINUTO family. In terms of assembly, interacts with calmodulin.

Its subcellular location is the microsome membrane. The enzyme catalyses lathosterol + NADP(+) = 5alpha-cholesta-7,24-dien-3beta-ol + NADPH + H(+). Functionally, plays a critical role in the general process of plant cell elongation. Involved in the synthesis of campesterol, an early precursor of brassinolide. Required for the conversion of 24-methylenecholesterol to campesterol and for the conversion of isofucosterol to sitosterol. Necessary for both the isomerization and reduction of 24-methylenecholesterol. Regulates indirectly phytochrome-mediated light responses through the modulation of brassinosteroid biosynthesis. This chain is Delta(24)-sterol reductase (DIM), found in Arabidopsis thaliana (Mouse-ear cress).